The chain runs to 244 residues: NAD(P)H-quinone oxidoreductase subunit K (244 aa).

[4Fe-4S] cluster contacts are provided by Cys60, Cys61, Cys125, and Cys156.

The protein belongs to the complex I 20 kDa subunit family. NDH-1 can be composed of about 15 different subunits; different subcomplexes with different compositions have been identified which probably have different functions. Requires [4Fe-4S] cluster as cofactor.

The protein localises to the cellular thylakoid membrane. The catalysed reaction is a plastoquinone + NADH + (n+1) H(+)(in) = a plastoquinol + NAD(+) + n H(+)(out). It carries out the reaction a plastoquinone + NADPH + (n+1) H(+)(in) = a plastoquinol + NADP(+) + n H(+)(out). Functionally, NDH-1 shuttles electrons from an unknown electron donor, via FMN and iron-sulfur (Fe-S) centers, to quinones in the respiratory and/or the photosynthetic chain. The immediate electron acceptor for the enzyme in this species is believed to be plastoquinone. Couples the redox reaction to proton translocation, and thus conserves the redox energy in a proton gradient. Cyanobacterial NDH-1 also plays a role in inorganic carbon-concentration. This chain is NAD(P)H-quinone oxidoreductase subunit K, found in Prochlorococcus marinus (strain AS9601).